Reading from the N-terminus, the 484-residue chain is MSYPQGYLYQPSASLALYSCPAYSTSVISGPRTDELGRSSSGSAFSPYAGSTAFTAPSPGYNSHLQYGADPAAAAAAAFSYVGSPYDHTPGMAGSLGYHPYAAPLGSYPYGDPAYRKNATRDATATLKAWLNEHRKNPYPTKGEKIMLAIITKMTLTQVSTWFANARRRLKKENKMTWTPRNRSEDEEEEENIDLEKNDEDEPQKPEDKGDLEGPESGGAEQKATAGCERLQGPLSPAGKETEGSLSDSDFKESSSEGRHDELPRPPRAGESSPAGPATARLAEDAGPHYPASVPAPGPHPSAGELPPGSGGSSVIHSPPPPPPPPPAVLAKPKLWSLAEIATSSDKVKDGGGGSEGSPCPPCPGPMGGQTLGGSRASPAPAPARSPSAQCPFPGGTVLSRPLYYTAPFYPGYTNYGSFGHLHGHPGPGPSPTAGPGSHFNGLNQTVLNRADVLAKDPKMLRSQSQLDLCKDSPYELKKGMSDI.

The homeobox; TALE-type DNA-binding region spans aspartate 112–asparagine 174. Disordered regions lie at residues methionine 176–phenylalanine 393 and glycine 424–leucine 443. Over residues glutamate 185–glutamate 202 the composition is skewed to acidic residues. 2 stretches are compositionally biased toward basic and acidic residues: residues proline 203–leucine 212 and serine 249–arginine 265. Position 273 is a phosphoserine (serine 273). A compositionally biased stretch (pro residues) spans serine 318 to alanine 328. Positions serine 375–alanine 389 are enriched in low complexity. A Phosphoserine modification is found at serine 465.

Belongs to the TALE/IRO homeobox family. Not expressed in the developing metanephric kidney or adult kidney.

Its subcellular location is the nucleus. Its function is as follows. Establishes the cardiac repolarization gradient by its repressive actions on the KCND2 potassium-channel gene. Required for retinal cone bipolar cell differentiation. May regulate contrast adaptation in the retina and control specific aspects of visual function in circuits of the mammalian retina. Involved in craniofacial and gonadal development. Modulates the migration of progenitor cell populations in branchial arches and gonads by repressing CXCL12. In Mus musculus (Mouse), this protein is Iroquois-class homeodomain protein IRX-5 (Irx5).